Consider the following 419-residue polypeptide: Subtilisin-like protease 2 (419 aa).

Residues 1 to 16 (MQLLNFGLLLLPFVAG) form the signal peptide. Positions 17-122 (DLAPQPEPLL…VHPDQHVYLA (106 aa)) are excised as a propeptide. Residues 36–122 (QYIVTLKEGL…VHPDQHVYLA (87 aa)) form the Inhibitor I9 domain. The region spanning 131–419 (RWGLGYMSSK…IQERKFKLPK (289 aa)) is the Peptidase S8 domain. Catalysis depends on charge relay system residues Asp169 and His201. N-linked (GlcNAc...) asparagine glycosylation is found at Asn248, Asn261, and Asn348. Ser357 (charge relay system) is an active-site residue. Asn388 is a glycosylation site (N-linked (GlcNAc...) asparagine).

Belongs to the peptidase S8 family.

Its subcellular location is the secreted. Its function is as follows. Secreted subtilisin-like serine protease with keratinolytic activity that contributes to pathogenicity. In Trichophyton verrucosum (Cattle ringworm fungus), this protein is Subtilisin-like protease 2 (SUB2).